The sequence spans 1941 residues: Xin actin-binding repeat-containing protein 1 (1941 aa).

The segment at 1 to 41 is disordered; it reads MAEPQKSSKVAIKKMEDDLPPPPIPDSIQVIAPASQDPNPL. 27 Xin repeats span residues 108-123, 143-158, 176-191, 215-230, 255-270, 293-308, 331-346, 368-383, 402-417, 439-454, 475-490, 510-525, 548-563, 586-601, 624-639, 658-673, 697-712, 736-751, 769-784, 805-820, 842-857, 880-895, 917-932, 951-966, 982-997, 1020-1035, and 1055-1070; these read GEVQSMRWIFENWALD, GDVKSTSLRFENQSVN, GDVHTARWLFETQPLD, GDVKGAKELFEAQSLD, GDVKKTIRLFQTEPLC, NAVRTARWLFETQPLD, PDVSGARWIFETQPLD, ADVTKQRLLFGTQALD, GDVKSTLWLFETQPME, GDVKQRKHVFETCPLG, GDVKSFKTLFETLPLD, GNVKANQILFETTPLY, GDVKKYKWMFETRPLD, GDVRTAKWLFETQPMD, GDVKTCRWLFETQPMH, ADVKSYTWMFETQPLD, VDVKTVRHLFETEPLG, GEVSRVKEFFEAKPLD, GSVHKFTWLFENYPMD, GDVGGKRFIFETYSLD, ANVKSCTMLFESQPLY, GDVKGARWLFETKPLD, GDVQAARWRFETEPLD, GDVQSNKQLFESQQVG, GDVRTSTWLFENQPVD, GDVKRCTWLFETQPMD, and ADVKSTTWLFESTPLD. Over residues 1514–1565 the composition is skewed to polar residues; it reads ASKQETKTLQSTIHQQESASTMRENTSTAIRTSTTRVQEASRTHTSVSQKSI. 3 disordered regions span residues 1514-1568, 1715-1856, and 1914-1941; these read ASKQ…IASH, ASGS…PPPA, and YKARKGGQGKFELDRAKPSKPVKNGEVG. Positions 1820–1833 are enriched in low complexity; the sequence is SASTNNSTNRSTKS. The span at 1834–1843 shows a compositional bias: pro residues; sequence VPPPVPPKPP.

The protein belongs to the Xin family. In terms of tissue distribution, expressed at intercalated disks in the heart (at protein level).

It localises to the cell junction. The protein localises to the adherens junction. Its subcellular location is the desmosome. Its function is as follows. Involved in cardiac morphogenesis, including heart midline formation, cardiac tubule looping, myocardial formation and maintenance of heart beat speed and rhythm. May protect actin filaments from depolymerization. May play a role in development of normal skeletal muscle morphology, muscle fiber type composition and regulation of muscle satellite cell activation and survival. The protein is Xin actin-binding repeat-containing protein 1 of Gallus gallus (Chicken).